A 591-amino-acid chain; its full sequence is Nuclear receptor subfamily 4 group A member 2 (591 aa).

Disordered regions lie at residues 1–22 and 110–133; these read MPCVQAQYGSSPQGASPASQSY and SEEMMSHSGSVYYKPSSPPTSSTP. A compositionally biased stretch (low complexity) spans 8 to 22; sequence YGSSPQGASPASQSY. The segment at residues 253–328 is a DNA-binding region (nuclear receptor); that stretch reads EGLCAVCGDN…VGMVKEVVRT (76 aa). 2 consecutive NR C4-type zinc fingers follow at residues 256–276 and 292–311; these read CAVCGDNAACQHYGVRTCEGC and CLANKNCPVDKRRRNRCQYC. A Bipartite nuclear localization signal (NLS1) motif is present at residues 280-307; sequence FKRTVQKNAKYVCLANKNCPVDKRRRNR. The interval 330-354 is disordered; sequence SLKGRRGRLPSKPKSPQEPSPPSPP. The short motif at 331–343 is the Nuclear localization signal (NLS1) element; the sequence is LKGRRGRLPSKPK. The segment covering 345–354 has biased composition (pro residues); it reads PQEPSPPSPP. An NR LBD domain is found at 353-588; sequence PPVSLISALV…AIIDKLFLDT (236 aa). Residues 436–445 carry the nuclear export sequence (NES1) motif; the sequence is FLELFVLRLA. A nuclear export sequence (NES2) motif is present at residues 561 to 570; the sequence is QGLQRIFYLK.

The protein belongs to the nuclear hormone receptor family.

It localises to the cytoplasm. It is found in the nucleus. Functionally, transcriptional regulator which may play a role in the differentiation and maintenance of meso-diencephalic dopaminergic (mdDA) neurons. The chain is Nuclear receptor subfamily 4 group A member 2 (nr4a2) from Xenopus tropicalis (Western clawed frog).